Here is a 277-residue protein sequence, read N- to C-terminus: Large ribosomal subunit protein uL2 (277 aa).

The interval 225–277 (AMNPVDHPHGGGEGKTSGGRHPVSPWGRPEGKTRRANKPSDRFIIRRKSRKRR) is disordered. Basic and acidic residues predominate over residues 253-268 (PEGKTRRANKPSDRFI).

The protein belongs to the universal ribosomal protein uL2 family. In terms of assembly, part of the 50S ribosomal subunit. Forms a bridge to the 30S subunit in the 70S ribosome.

Functionally, one of the primary rRNA binding proteins. Required for association of the 30S and 50S subunits to form the 70S ribosome, for tRNA binding and peptide bond formation. It has been suggested to have peptidyltransferase activity; this is somewhat controversial. Makes several contacts with the 16S rRNA in the 70S ribosome. In Tropheryma whipplei (strain TW08/27) (Whipple's bacillus), this protein is Large ribosomal subunit protein uL2.